The sequence spans 905 residues: Isoleucine--tRNA ligase (905 aa).

The short motif at 56 to 66 (PYANGNIHMGT) is the 'HIGH' region element. L-isoleucyl-5'-AMP is bound at residue E563. Residues 604 to 608 (KMSKS) carry the 'KMSKS' region motif. Position 607 (K607) interacts with ATP.

This sequence belongs to the class-I aminoacyl-tRNA synthetase family. IleS type 1 subfamily. In terms of assembly, monomer.

The protein localises to the cytoplasm. It catalyses the reaction tRNA(Ile) + L-isoleucine + ATP = L-isoleucyl-tRNA(Ile) + AMP + diphosphate. In terms of biological role, catalyzes the attachment of isoleucine to tRNA(Ile). As IleRS can inadvertently accommodate and process structurally similar amino acids such as valine, to avoid such errors it has two additional distinct tRNA(Ile)-dependent editing activities. One activity is designated as 'pretransfer' editing and involves the hydrolysis of activated Val-AMP. The other activity is designated 'posttransfer' editing and involves deacylation of mischarged Val-tRNA(Ile). The sequence is that of Isoleucine--tRNA ligase from Pelagibacter ubique (strain HTCC1062).